Reading from the N-terminus, the 343-residue chain is Selenide, water dikinase (343 aa).

Sec-16 is an active-site residue. Position 16 (Sec-16) is a non-standard amino acid, selenocysteine. ATP-binding positions include Lys-19 and 46–48 (GAE). Asp-49 is a binding site for Mg(2+). Residues Asp-66, Asp-89, and 137–139 (GHT) contribute to the ATP site. Asp-89 is a Mg(2+) binding site. Residue Asp-225 coordinates Mg(2+).

Belongs to the selenophosphate synthase 1 family. Class I subfamily. As to quaternary structure, homodimer. Mg(2+) serves as cofactor.

The catalysed reaction is hydrogenselenide + ATP + H2O = selenophosphate + AMP + phosphate + 2 H(+). In terms of biological role, synthesizes selenophosphate from selenide and ATP. The chain is Selenide, water dikinase from Geobacter sp. (strain M21).